The following is a 394-amino-acid chain: uncharacterized protein (394 aa).

A phosphoserine mark is found at serine 117 and serine 121. 3 disordered regions span residues 177–295 (DSDE…PGTF), 315–347 (KRSIMLPQDIDPTFPDSEPEDDGHASSTVGSLS), and 370–394 (SSEVLRNSKSPPLDIARKAVGAHRV). A compositionally biased stretch (acidic residues) spans 178-190 (SDEEDEVDDEEIE). Polar residues-rich tracts occupy residues 191 to 207 (SFNSFSRKMQTISNSRY) and 216 to 230 (EKQSCSSESDRVSQI). 2 stretches are compositionally biased toward acidic residues: residues 231-263 (SDDEEDEEGSADEEDEEDSDVELSESSLSDDED) and 284-295 (IPDDTDFVPGTF). Positions 370–379 (SSEVLRNSKS) are enriched in polar residues. Residue serine 379 is modified to Phosphoserine.

The protein resides in the nucleus. This is an uncharacterized protein from Schizosaccharomyces pombe (strain 972 / ATCC 24843) (Fission yeast).